We begin with the raw amino-acid sequence, 622 residues long: Cell pattern formation-associated protein stuA (622 aa).

Disordered stretches follow at residues 1–24 (MASM…QTYA) and 62–81 (YPNS…SISS). The region spanning 129–235 (RVTATLWEDE…QHISNLLYHP (107 aa)) is the HTH APSES-type domain. The H-T-H motif DNA-binding region spans 163–184 (GTKLLNVAGMTRGRRDGILKSE). Disordered stretches follow at residues 239–517 (NQRN…TPPR) and 549–622 (SNSG…SARR). Composition is skewed to polar residues over residues 274-283 (LQTPVPSHMS), 302-345 (ASAS…ARSM), and 355-370 (GNNL…QSGY). A compositionally biased stretch (low complexity) spans 384-395 (PQYAPQQPLPQQ). Composition is skewed to polar residues over residues 404 to 421 (MPTS…QRGS), 455 to 470 (SGYN…TNPS), 480 to 506 (QLTP…NTAP), and 549 to 563 (SNSG…SMGS). The tract at residues 565–590 (KRMRDDDDDRIVPPDSRGEFDTKRRK) is nuclear localization domain. Positions 566-586 (RMRDDDDDRIVPPDSRGEFDT) are enriched in basic and acidic residues.

This sequence belongs to the EFG1/PHD1/stuA family.

It is found in the nucleus. Functionally, transcription factor that regulates asexual reproduction. Binds the StuA-response elements (StRE) with the consensus sequence 5'-(A/T)CGCG(T/A)N(A/C)-3' at the promoters of target genes. Required from the very earliest events of asexual reproduction until completion of conidiophore development, but is not specifically required for differentiation of conidia. Represses transcription of the abaA developmental regulatory gene and of the developmentally regulated awh11 gene. Controls the expression of the catalase-peroxidase gene cpeA. Plays an important role in cell wall biogenesis during the development by controlling the transcription level of fksA. This chain is Cell pattern formation-associated protein stuA, found in Emericella nidulans (strain FGSC A4 / ATCC 38163 / CBS 112.46 / NRRL 194 / M139) (Aspergillus nidulans).